Here is a 452-residue protein sequence, read N- to C-terminus: MREIINIHIGQAGIQAGEQVWSLMCAEHGINQDGTRNSTSANGNSDCSVLFSEGSRGKYVPRNLMVDLEPSVVDSVRNSSYKELYHPAQMITGREDAANNFARGHYTVGKDMLDVTVDRLRKIADNCTSLQGFQIFHSVGGGTGSGFASLLVERLSVEFPKKCKLSYTVYPSPQLATSVVEPYNSVLSTHSLLEHNDISVVLDNQAIYDICKQRLKIERANYRNLNHVISQTVSAITCSLRFSGSLNVDMNEYQTNLVPYPRIHFMLSSLAPMISRQENYYHENNVAELTSSVFEADNMMAKCNPRDGKYIASCLMYRGDVVNKEVTDAVKNVKSKANIQFVDWSPCAFKIGVNSQKPTVLPDSEFAQVERSCAMISNNTAISQVFERMNDKFDLLYAKRAYVHHFVSEGMEEGEFAEAREDLAALEKDYTELASNSVNEEDSMLDEGETLN.

The GTP site is built by Gln11, Glu69, Ser138, Gly142, Thr143, Thr177, Asn204, and Asn226. Position 69 (Glu69) interacts with Mg(2+). Residue Glu252 is part of the active site.

Belongs to the tubulin family. Dimer of alpha and beta chains. A typical microtubule is a hollow water-filled tube with an outer diameter of 25 nm and an inner diameter of 15 nM. Alpha-beta heterodimers associate head-to-tail to form protofilaments running lengthwise along the microtubule wall with the beta-tubulin subunit facing the microtubule plus end conferring a structural polarity. Microtubules usually have 13 protofilaments but different protofilament numbers can be found in some organisms and specialized cells. Mg(2+) is required as a cofactor.

The protein localises to the cytoplasm. The protein resides in the cytoskeleton. It is found in the spindle. It carries out the reaction GTP + H2O = GDP + phosphate + H(+). Tubulin is the major constituent of microtubules, a cylinder consisting of laterally associated linear protofilaments composed of alpha- and beta-tubulin heterodimers. Microtubules grow by the addition of GTP-tubulin dimers to the microtubule end, where a stabilizing cap forms. Below the cap, tubulin dimers are in GDP-bound state, owing to GTPase activity of alpha-tubulin. This chain is Tubulin alpha-6 chain (TUBA6), found in Naegleria pringsheimi (Amoeba).